The primary structure comprises 238 residues: Large ribosomal subunit protein uL2 (238 aa).

Residues 1–11 are compositionally biased toward polar residues; it reads MGKRLISQNRG. 2 disordered regions span residues 1–22 and 202–223; these read MGKR…APSH and FGGG…APPG.

The protein belongs to the universal ribosomal protein uL2 family. As to quaternary structure, part of the 50S ribosomal subunit. Forms a bridge to the 30S subunit in the 70S ribosome.

Its function is as follows. One of the primary rRNA binding proteins. Required for association of the 30S and 50S subunits to form the 70S ribosome, for tRNA binding and peptide bond formation. It has been suggested to have peptidyltransferase activity; this is somewhat controversial. Makes several contacts with the 16S rRNA in the 70S ribosome. The chain is Large ribosomal subunit protein uL2 from Methanosarcina mazei (strain ATCC BAA-159 / DSM 3647 / Goe1 / Go1 / JCM 11833 / OCM 88) (Methanosarcina frisia).